The primary structure comprises 312 residues: Coproporphyrin III ferrochelatase (312 aa).

Fe-coproporphyrin III-binding positions include tyrosine 13, arginine 30, 46–47 (RY), serine 54, and tyrosine 125. Fe(2+) is bound by residues histidine 182 and glutamate 263.

This sequence belongs to the ferrochelatase family.

It localises to the cytoplasm. It catalyses the reaction Fe-coproporphyrin III + 2 H(+) = coproporphyrin III + Fe(2+). It participates in porphyrin-containing compound metabolism; protoheme biosynthesis. In terms of biological role, involved in coproporphyrin-dependent heme b biosynthesis. Catalyzes the insertion of ferrous iron into coproporphyrin III to form Fe-coproporphyrin III. This chain is Coproporphyrin III ferrochelatase, found in Oceanobacillus iheyensis (strain DSM 14371 / CIP 107618 / JCM 11309 / KCTC 3954 / HTE831).